The sequence spans 364 residues: Probable UDP-arabinopyranose mutase 1 (364 aa).

The DXD motif motif lies at 103-105; sequence DDD. An N-linked (Glc...) arginine glycan is attached at arginine 151.

The protein belongs to the RGP family. Homopentamer or homohexamer. The cofactor is Mn(2+). Mg(2+) serves as cofactor. Reversibly glycosylated by UDP-glucose, UDP-xylose and UDP-galactose, but not UDP-mannose.

It is found in the secreted. It localises to the cell wall. The protein resides in the cell junction. The protein localises to the plasmodesma. Its subcellular location is the golgi apparatus. The enzyme catalyses UDP-beta-L-arabinofuranose = UDP-beta-L-arabinopyranose. Inhibited by inhibitor protein (IP) which may be a form of sucrose synthase. Functionally, probable UDP-L-arabinose mutase involved in the biosynthesis of cell wall non-cellulosic polysaccharides. Was initially shown to possess an autoglycosylating activity which is dependent on the presence of UDP-glucose and manganese. The protein is Probable UDP-arabinopyranose mutase 1 of Pisum sativum (Garden pea).